The primary structure comprises 221 residues: Iron-sulfur cluster repair protein YtfE (221 aa).

This sequence belongs to the RIC family. YtfE subfamily. In terms of assembly, homodimer.

The protein resides in the cytoplasm. Functionally, di-iron-containing protein involved in the repair of iron-sulfur clusters damaged by oxidative and nitrosative stress conditions. This is Iron-sulfur cluster repair protein YtfE from Dickeya chrysanthemi (strain Ech1591) (Dickeya zeae (strain Ech1591)).